The following is a 401-amino-acid chain: uncharacterized protein (401 aa).

The next 10 membrane-spanning stretches (helical) occupy residues 20 to 40, 49 to 69, 83 to 100, 104 to 121, 140 to 160, 167 to 187, 207 to 227, 248 to 268, 289 to 309, and 357 to 377; these read FFGELLTSLTGAMMGPFMVLY, IMMPMLIISLQPFADIFLTLA, ILTALLLQSAAMTGFVFA, YVFAILYVMNGIGRSLYI, VFAVINAIYSTGLTAGPLVGM, PVWIFALDAAALFIYFLIAAL, FTIYRPVLLLLLLSLPISMLY, MLTIYSAAKALFSCVLQVPLV, LAAAGFACSTSLTMLLVTAAV, and GLILTSFGGEVIFYALAVCLL.

This sequence belongs to the major facilitator superfamily.

Its subcellular location is the cell membrane. This is an uncharacterized protein from Bacillus subtilis (strain 168).